The primary structure comprises 264 residues: uncharacterized protein (264 aa).

A signal peptide spans 1-23 (MQQWNLTISNILIGLFFCFSAQA).

This is an uncharacterized protein from Shewanella oneidensis (strain ATCC 700550 / JCM 31522 / CIP 106686 / LMG 19005 / NCIMB 14063 / MR-1).